The chain runs to 359 residues: Type-1 angiotensin II receptor (359 aa).

The Extracellular portion of the chain corresponds to 1 to 25 (MALNSSADDGIKRIQDDCPKAGRHS). The N-linked (GlcNAc...) asparagine glycan is linked to N4. Angiotensin II contacts are provided by Q15 and D17. 2 disulfide bridges follow: C18/C274 and C101/C180. The chain crosses the membrane as a helical span at residues 26 to 55 (YIFVMIPTLYSIIFVVGIFGNSLVVIVIYF). The Cytoplasmic segment spans residues 56 to 61 (YMKLKT). Residues 62–89 (VASVFLLNLALADLCFLLTLPVWAVYTA) form a helical membrane-spanning segment. Over 90–98 (MEYRWPFGN) the chain is Extracellular. Residues 99–125 (HLCKIASAGISFNLYASVFLLTCLSID) traverse the membrane as a helical segment. At 126 to 141 (RYLAIVHPMKSRLRRT) the chain is on the cytoplasmic side. Residues 142–165 (MLVAKVTCVVIWLLAGLASLPAVI) traverse the membrane as a helical segment. Topologically, residues 166–190 (HRNVYFIENTNSTVCAFHYESQNST) are extracellular. R167 provides a ligand contact to angiotensin II. N176 is a glycosylation site (N-linked (GlcNAc...) asparagine). Residues F182, H183, and Y184 each coordinate angiotensin II. An N-linked (GlcNAc...) asparagine glycan is attached at N188. Residues 191–216 (LPVGLGLTKNILGFMFPFLIILTSYT) traverse the membrane as a helical segment. K199 contacts angiotensin II. The Cytoplasmic segment spans residues 217 to 239 (LIWKALKKAYEIQKNKPRNDDIF). The helical transmembrane segment at 240 to 268 (RIIMAIVLFFFFSWIPHQIFTFLDVLIQL) threads the bilayer. Over 269 to 278 (GVIRDCKIAD) the chain is Extracellular. Residues 279–304 (VVDTAMPITICIAYFNNCLNPLFYGF) traverse the membrane as a helical segment. At 305–359 (LGKKFKKYFLQLLKYIPPKAKSHSSLSTKMSTLSYRPSDNMNSSAKKPASCFEVE) the chain is on the cytoplasmic side. C355 is lipidated: S-palmitoyl cysteine.

It belongs to the G-protein coupled receptor 1 family. As to quaternary structure, interacts with MAS1. Interacts with ARRB1. Interacts with FLNA (via filamin repeat 21); increases PKA-mediated phosphorylation of FLNA. Post-translationally, C-terminal Ser or Thr residues may be phosphorylated.

It is found in the cell membrane. In terms of biological role, receptor for angiotensin II, a vasoconstricting peptide, which acts as a key regulator of blood pressure and sodium retention by the kidney. The activated receptor in turn couples to G-alpha proteins G(q) (GNAQ, GNA11, GNA14 or GNA15) and thus activates phospholipase C and increases the cytosolic Ca(2+) concentrations, which in turn triggers cellular responses such as stimulation of protein kinase C. In Meriones unguiculatus (Mongolian jird), this protein is Type-1 angiotensin II receptor (AGTR1).